The sequence spans 62 residues: uncharacterized protein (62 aa).

Residues 38-62 are disordered; sequence VKSESDTADSKRSAEAKADEAPAKM.

This is an uncharacterized protein from Schizosaccharomyces pombe (strain 972 / ATCC 24843) (Fission yeast).